We begin with the raw amino-acid sequence, 856 residues long: Structure-specific endonuclease subunit SLX4 (856 aa).

Residues 1–19 (MDNAAIASQSNTPPSNGRS) show a composition bias toward polar residues. Disordered stretches follow at residues 1 to 24 (MDNAAIASQSNTPPSNGRSSARFV), 38 to 65 (VIEPSSPFSPPSPSTLLTSLSKSPSHKI), 88 to 121 (VDSPKRQDKSITGSKAKPASTMRHGQRTASHKMA), 139 to 202 (KTRK…DNEL), 296 to 326 (GIQTPTESRPATNDSQSISSKQQRVKVKKPQ), 362 to 392 (KKMGVTKRTSGTERANAARGKSDTLKNGNGP), 621 to 640 (SKSSKLEPKPNQRNHKSQGD), 668 to 689 (RLAKTSVKSQEPKSFSLSNEGP), and 715 to 742 (DSVGEALPLSPSHSSNGNGTLHHPQDCD). The segment covering 51–60 (STLLTSLSKS) has biased composition (low complexity). Residues 139–152 (KTRKKKAATAKRTR) are compositionally biased toward basic residues. Positions 296 to 309 (GIQTPTESRPATND) are enriched in polar residues. Residues 673-686 (SVKSQEPKSFSLSN) are compositionally biased toward polar residues.

This sequence belongs to the SLX4 family. As to quaternary structure, forms a heterodimer with SLX1. In terms of processing, phosphorylated in response to DNA damage.

The protein resides in the nucleus. In terms of biological role, regulatory subunit of the SLX1-SLX4 structure-specific endonuclease that resolves DNA secondary structures generated during DNA repair and recombination. Has endonuclease activity towards branched DNA substrates, introducing single-strand cuts in duplex DNA close to junctions with ss-DNA. The protein is Structure-specific endonuclease subunit SLX4 of Blastomyces gilchristii (strain SLH14081) (Blastomyces dermatitidis).